A 217-amino-acid polypeptide reads, in one-letter code: Probable nicotinate-nucleotide adenylyltransferase (217 aa).

Belongs to the NadD family.

The enzyme catalyses nicotinate beta-D-ribonucleotide + ATP + H(+) = deamido-NAD(+) + diphosphate. Its pathway is cofactor biosynthesis; NAD(+) biosynthesis; deamido-NAD(+) from nicotinate D-ribonucleotide: step 1/1. Catalyzes the reversible adenylation of nicotinate mononucleotide (NaMN) to nicotinic acid adenine dinucleotide (NaAD). The sequence is that of Probable nicotinate-nucleotide adenylyltransferase from Dechloromonas aromatica (strain RCB).